The chain runs to 338 residues: UDP-glucose 4-epimerase (338 aa).

NAD(+) contacts are provided by residues 11 to 12 (YI), 31 to 36 (DNLCNS), 58 to 59 (DI), 80 to 84 (FAGLK), asparagine 99, serine 124, tyrosine 149, lysine 153, and phenylalanine 178. Residues serine 124 and tyrosine 149 each contribute to the substrate site. Tyrosine 149 functions as the Proton acceptor in the catalytic mechanism. Substrate contacts are provided by residues asparagine 179, 199 to 200 (NL), 216 to 218 (AIF), arginine 231, 292 to 295 (REGD), and tyrosine 299.

It belongs to the NAD(P)-dependent epimerase/dehydratase family. Homodimer. It depends on NAD(+) as a cofactor.

It catalyses the reaction UDP-alpha-D-glucose = UDP-alpha-D-galactose. Its pathway is carbohydrate metabolism; galactose metabolism. With respect to regulation, inhibited by UDP-phenol and NaBH3CN. In terms of biological role, involved in the metabolism of galactose. Catalyzes the conversion of UDP-galactose (UDP-Gal) to UDP-glucose (UDP-Glc) through a mechanism involving the transient reduction of NAD. It is only active on UDP-galactose and UDP-glucose. The chain is UDP-glucose 4-epimerase (galE) from Escherichia coli (strain K12).